Reading from the N-terminus, the 867-residue chain is Protein translocase subunit SecA (867 aa).

ATP-binding positions include Q86, 104–108 (GEGKT), and D499. Zn(2+)-binding residues include C848, C850, C859, and H860.

This sequence belongs to the SecA family. As to quaternary structure, monomer and homodimer. Part of the essential Sec protein translocation apparatus which comprises SecA, SecYEG and auxiliary proteins SecDF-YajC and YidC. Zn(2+) is required as a cofactor.

Its subcellular location is the cell membrane. It localises to the cytoplasm. It carries out the reaction ATP + H2O + cellular proteinSide 1 = ADP + phosphate + cellular proteinSide 2.. Its function is as follows. Part of the Sec protein translocase complex. Interacts with the SecYEG preprotein conducting channel. Has a central role in coupling the hydrolysis of ATP to the transfer of proteins into and across the cell membrane, serving both as a receptor for the preprotein-SecB complex and as an ATP-driven molecular motor driving the stepwise translocation of polypeptide chains across the membrane. This is Protein translocase subunit SecA from Wolbachia sp. subsp. Brugia malayi (strain TRS).